The chain runs to 278 residues: Diaminopimelate epimerase (278 aa).

Positions 13, 46, and 66 each coordinate substrate. The active-site Proton donor is Cys75. Substrate-binding positions include 76–77 (GN), Asn159, Asn192, and 210–211 (ER). Cys219 functions as the Proton acceptor in the catalytic mechanism. Residue 220–221 (GT) coordinates substrate.

It belongs to the diaminopimelate epimerase family. Homodimer.

Its subcellular location is the cytoplasm. The catalysed reaction is (2S,6S)-2,6-diaminopimelate = meso-2,6-diaminopimelate. Its pathway is amino-acid biosynthesis; L-lysine biosynthesis via DAP pathway; DL-2,6-diaminopimelate from LL-2,6-diaminopimelate: step 1/1. Its function is as follows. Catalyzes the stereoinversion of LL-2,6-diaminopimelate (L,L-DAP) to meso-diaminopimelate (meso-DAP), a precursor of L-lysine and an essential component of the bacterial peptidoglycan. This Laribacter hongkongensis (strain HLHK9) protein is Diaminopimelate epimerase.